A 474-amino-acid polypeptide reads, in one-letter code: ABHD16B (474 aa).

In terms of domain architecture, AB hydrolase-1 spans 175 to 293; sequence VICCEGNAGF…MPQSWKGLVV (119 aa). Residues S248, D323, and H423 each act as charge relay system in the active site.

It belongs to the AB hydrolase superfamily. ABHD16 family.

The enzyme catalyses a 1,2-diacyl-sn-glycero-3-phospho-L-serine + H2O = a 2-acyl-sn-glycero-3-phospho-L-serine + a fatty acid + H(+). The catalysed reaction is a 1-acylglycerol + H2O = glycerol + a fatty acid + H(+). It carries out the reaction 1-(9Z-octadecenoyl)-glycerol + H2O = glycerol + (9Z)-octadecenoate + H(+). Functionally, hydrolyzes the sn-1 position of glycerophospholipids with high specificity towards phosphatidylserine (PS), PS-PLA1 enzyme. Also hydrolyzes the acyl chain of glycerolipids with a preference for the monoacylglycerol (MAG) 1-acylglycerol, MAG lipase. Plays a regulatory role in cellular lipid homeostasis by modulating genes involved in neutral lipid degradation and in phospholipid synthesis and composition. The sequence is that of ABHD16B from Rattus norvegicus (Rat).